The following is an 874-amino-acid chain: Cyanophycin synthetase (874 aa).

The 257-residue stretch at 224–480 folds into the ATP-grasp domain; it reads KTTLAEAGIP…VAAPVIDMLF (257 aa). 495 to 501 is a binding site for ATP; sequence GTNGKTT.

It in the C-terminal section; belongs to the MurCDEF family. In terms of assembly, homodimer.

It catalyses the reaction [L-4-(L-arginin-2-N-yl)aspartate](n) + L-aspartate + ATP = [L-4-(L-arginin-2-N-yl)aspartate](n)-L-aspartate + ADP + phosphate + H(+). It carries out the reaction [L-4-(L-arginin-2-N-yl)aspartate](n)-L-aspartate + L-arginine + ATP = [L-4-(L-arginin-2-N-yl)aspartate](n+1) + ADP + phosphate + H(+). In terms of biological role, catalyzes the ATP-dependent polymerization of arginine and aspartate to multi-L-arginyl-poly-L-aspartic acid (cyanophycin; a water-insoluble reserve polymer). The chain is Cyanophycin synthetase (cphA) from Geminocystis herdmanii (strain PCC 6308) (Synechocystis sp. (strain PCC 6308)).